A 417-amino-acid polypeptide reads, in one-letter code: UDP-N-acetylmuramoylalanine--D-glutamate ligase (417 aa).

101 to 107 contributes to the ATP binding site; it reads GTAGKTS.

This sequence belongs to the MurCDEF family.

It is found in the cytoplasm. The enzyme catalyses UDP-N-acetyl-alpha-D-muramoyl-L-alanine + D-glutamate + ATP = UDP-N-acetyl-alpha-D-muramoyl-L-alanyl-D-glutamate + ADP + phosphate + H(+). It participates in cell wall biogenesis; peptidoglycan biosynthesis. Its function is as follows. Cell wall formation. Catalyzes the addition of glutamate to the nucleotide precursor UDP-N-acetylmuramoyl-L-alanine (UMA). This is UDP-N-acetylmuramoylalanine--D-glutamate ligase from Thermus thermophilus (strain ATCC BAA-163 / DSM 7039 / HB27).